Here is a 104-residue protein sequence, read N- to C-terminus: Urease subunit beta (104 aa).

Belongs to the urease beta subunit family. In terms of assembly, heterotrimer of UreA (gamma), UreB (beta) and UreC (alpha) subunits. Three heterotrimers associate to form the active enzyme.

It is found in the cytoplasm. It catalyses the reaction urea + 2 H2O + H(+) = hydrogencarbonate + 2 NH4(+). It participates in nitrogen metabolism; urea degradation; CO(2) and NH(3) from urea (urease route): step 1/1. This chain is Urease subunit beta, found in Rhodococcus jostii (strain RHA1).